Here is a 169-residue protein sequence, read N- to C-terminus: Crossover junction endodeoxyribonuclease RuvC (169 aa).

Active-site residues include Asp-12, Glu-72, and Asp-144. Mg(2+) contacts are provided by Asp-12, Glu-72, and Asp-144.

The protein belongs to the RuvC family. Homodimer which binds Holliday junction (HJ) DNA. The HJ becomes 2-fold symmetrical on binding to RuvC with unstacked arms; it has a different conformation from HJ DNA in complex with RuvA. In the full resolvosome a probable DNA-RuvA(4)-RuvB(12)-RuvC(2) complex forms which resolves the HJ. Mg(2+) is required as a cofactor.

The protein resides in the cytoplasm. The enzyme catalyses Endonucleolytic cleavage at a junction such as a reciprocal single-stranded crossover between two homologous DNA duplexes (Holliday junction).. The RuvA-RuvB-RuvC complex processes Holliday junction (HJ) DNA during genetic recombination and DNA repair. Endonuclease that resolves HJ intermediates. Cleaves cruciform DNA by making single-stranded nicks across the HJ at symmetrical positions within the homologous arms, yielding a 5'-phosphate and a 3'-hydroxyl group; requires a central core of homology in the junction. The consensus cleavage sequence is 5'-(A/T)TT(C/G)-3'. Cleavage occurs on the 3'-side of the TT dinucleotide at the point of strand exchange. HJ branch migration catalyzed by RuvA-RuvB allows RuvC to scan DNA until it finds its consensus sequence, where it cleaves and resolves the cruciform DNA. The sequence is that of Crossover junction endodeoxyribonuclease RuvC from Azorhizobium caulinodans (strain ATCC 43989 / DSM 5975 / JCM 20966 / LMG 6465 / NBRC 14845 / NCIMB 13405 / ORS 571).